A 157-amino-acid chain; its full sequence is 3-hydroxyacyl-[acyl-carrier-protein] dehydratase FabZ (157 aa).

Residue His58 is part of the active site.

Belongs to the thioester dehydratase family. FabZ subfamily.

The protein resides in the cytoplasm. It catalyses the reaction a (3R)-hydroxyacyl-[ACP] = a (2E)-enoyl-[ACP] + H2O. In terms of biological role, involved in unsaturated fatty acids biosynthesis. Catalyzes the dehydration of short chain beta-hydroxyacyl-ACPs and long chain saturated and unsaturated beta-hydroxyacyl-ACPs. This Rhizobium rhizogenes (strain K84 / ATCC BAA-868) (Agrobacterium radiobacter) protein is 3-hydroxyacyl-[acyl-carrier-protein] dehydratase FabZ.